We begin with the raw amino-acid sequence, 153 residues long: Probable histone H2A.4 (153 aa).

The segment covering 1–12 (MDSGTKVKKGAA) has biased composition (basic residues). Disordered regions lie at residues 1 to 30 (MDSGTKVKKGAAGRRSGGGPKKKPVSRSVK) and 129 to 153 (KSEKAASTTKTPKSPSKATKSPKKS). Positions 133–147 (AASTTKTPKSPSKAT) are enriched in low complexity. The short motif at 149 to 152 (SPKK) is the SPKK motif element.

The protein belongs to the histone H2A family. As to quaternary structure, the nucleosome is a histone octamer containing two molecules each of H2A, H2B, H3 and H4 assembled in one H3-H4 heterotetramer and two H2A-H2B heterodimers. The octamer wraps approximately 147 bp of DNA. Post-translationally, not ubiquitinated.

The protein resides in the nucleus. Its subcellular location is the chromosome. Functionally, core component of nucleosome. Nucleosomes wrap and compact DNA into chromatin, limiting DNA accessibility to the cellular machineries which require DNA as a template. Histones thereby play a central role in transcription regulation, DNA repair, DNA replication and chromosomal stability. DNA accessibility is regulated via a complex set of post-translational modifications of histones, also called histone code, and nucleosome remodeling. In Arabidopsis thaliana (Mouse-ear cress), this protein is Probable histone H2A.4.